The chain runs to 224 residues: 7-cyano-7-deazaguanine synthase (224 aa).

12-22 (LSGGLDSSTVT) lines the ATP pocket. 4 residues coordinate Zn(2+): C193, C201, C204, and C207.

The protein belongs to the QueC family. The cofactor is Zn(2+).

It catalyses the reaction 7-carboxy-7-deazaguanine + NH4(+) + ATP = 7-cyano-7-deazaguanine + ADP + phosphate + H2O + H(+). It functions in the pathway purine metabolism; 7-cyano-7-deazaguanine biosynthesis. In terms of biological role, catalyzes the ATP-dependent conversion of 7-carboxy-7-deazaguanine (CDG) to 7-cyano-7-deazaguanine (preQ(0)). The chain is 7-cyano-7-deazaguanine synthase from Prochlorococcus marinus (strain MIT 9312).